We begin with the raw amino-acid sequence, 418 residues long: Tyrosine--tRNA ligase (418 aa).

Residue Tyr38 coordinates L-tyrosine. A 'HIGH' region motif is present at residues 43–52; it reads CTARSLHIGS. 2 residues coordinate L-tyrosine: Tyr175 and Gln179. A 'KMSKS' region motif is present at residues 235–239; it reads KMGKT. Lys238 contacts ATP. Residues 348 to 413 enclose the S4 RNA-binding domain; it reads LSVVKLLQVS…CGKKRHLKVV (66 aa).

The protein belongs to the class-I aminoacyl-tRNA synthetase family. TyrS type 1 subfamily. In terms of assembly, homodimer.

The protein resides in the cytoplasm. It carries out the reaction tRNA(Tyr) + L-tyrosine + ATP = L-tyrosyl-tRNA(Tyr) + AMP + diphosphate + H(+). Functionally, catalyzes the attachment of tyrosine to tRNA(Tyr) in a two-step reaction: tyrosine is first activated by ATP to form Tyr-AMP and then transferred to the acceptor end of tRNA(Tyr). The sequence is that of Tyrosine--tRNA ligase from Ehrlichia ruminantium (strain Gardel).